The following is a 462-amino-acid chain: Asparagine--tRNA ligase (462 aa).

This sequence belongs to the class-II aminoacyl-tRNA synthetase family. In terms of assembly, homodimer.

It localises to the cytoplasm. The enzyme catalyses tRNA(Asn) + L-asparagine + ATP = L-asparaginyl-tRNA(Asn) + AMP + diphosphate + H(+). The sequence is that of Asparagine--tRNA ligase from Thermosynechococcus vestitus (strain NIES-2133 / IAM M-273 / BP-1).